The following is an 862-amino-acid chain: Eukaryotic translation initiation factor 3 subunit C (862 aa).

Residues 1–81 (MSSRFFYGGG…EEEEKVTVVK (81 aa)) are disordered. Residues 17–54 (SSDEEELYSDREEEEKSEEEESSEEEDETSEEEESDEE) are compositionally biased toward acidic residues. Positions 55–65 (TGARKFLKDVA) are enriched in basic and acidic residues. Residues 66–75 (SDSEEEEEEE) are compositionally biased toward acidic residues. A PCI domain is found at 600–774 (FHMHINLELL…NAIVFRKGVE (175 aa)). A disordered region spans residues 813–862 (RDQGAGARGGRGSGRGGQARGGPRFPGGQQGRRPGGQQFGGGALGGAIKA). A compositionally biased stretch (gly residues) spans 818–862 (GARGGRGSGRGGQARGGPRFPGGQQGRRPGGQQFGGGALGGAIKA).

It belongs to the eIF-3 subunit C family. In terms of assembly, component of the eukaryotic translation initiation factor 3 (eIF-3) complex.

The protein resides in the cytoplasm. Its function is as follows. Component of the eukaryotic translation initiation factor 3 (eIF-3) complex, which is involved in protein synthesis of a specialized repertoire of mRNAs and, together with other initiation factors, stimulates binding of mRNA and methionyl-tRNAi to the 40S ribosome. The eIF-3 complex specifically targets and initiates translation of a subset of mRNAs involved in cell proliferation. The sequence is that of Eukaryotic translation initiation factor 3 subunit C (nip1) from Aspergillus fumigatus (strain CBS 144.89 / FGSC A1163 / CEA10) (Neosartorya fumigata).